Here is a 206-residue protein sequence, read N- to C-terminus: MDKKNEQQEVREENDTSINQESETQVELEEEVVNEECETSSEKTDEKEVDDENVTDINSKLAEKKLQDELDELNDKYQRLQAEYANYRRRTQQEKETIGVFANEKIITELIPVIDSMERALDACEDKEDTMYKGISLVHKQLIDTLVKFGVEEIEAESKEFDPNLHLAVMQESVDGVEANQIVMVLQKGYKLGTKVVRPSMVKVSC.

Over residues 1–14 (MDKKNEQQEVREEN) the composition is skewed to basic and acidic residues. A disordered region spans residues 1-56 (MDKKNEQQEVREENDTSINQESETQVELEEEVVNEECETSSEKTDEKEVDDENVTD). Residues 24–39 (TQVELEEEVVNEECET) show a composition bias toward acidic residues.

It belongs to the GrpE family. As to quaternary structure, homodimer.

The protein localises to the cytoplasm. Its function is as follows. Participates actively in the response to hyperosmotic and heat shock by preventing the aggregation of stress-denatured proteins, in association with DnaK and GrpE. It is the nucleotide exchange factor for DnaK and may function as a thermosensor. Unfolded proteins bind initially to DnaJ; upon interaction with the DnaJ-bound protein, DnaK hydrolyzes its bound ATP, resulting in the formation of a stable complex. GrpE releases ADP from DnaK; ATP binding to DnaK triggers the release of the substrate protein, thus completing the reaction cycle. Several rounds of ATP-dependent interactions between DnaJ, DnaK and GrpE are required for fully efficient folding. The polypeptide is Protein GrpE (Clostridioides difficile (strain 630) (Peptoclostridium difficile)).